Reading from the N-terminus, the 255-residue chain is EEF1A lysine methyltransferase 4 (255 aa).

S-adenosyl-L-methionine is bound by residues Trp-26 and Tyr-30. Tyr-39 carries the phosphotyrosine modification. S-adenosyl-L-methionine is bound by residues Trp-41, Gly-66, 88–89, 113–114, and Lys-130; these read DY and DV. Positions 129–134 match the Required for methyltransferase activity motif; the sequence is EKGTLD.

This sequence belongs to the methyltransferase superfamily.

The enzyme catalyses L-lysyl-[protein] + S-adenosyl-L-methionine = N(6)-methyl-L-lysyl-[protein] + S-adenosyl-L-homocysteine + H(+). It carries out the reaction N(6)-methyl-L-lysyl-[protein] + S-adenosyl-L-methionine = N(6),N(6)-dimethyl-L-lysyl-[protein] + S-adenosyl-L-homocysteine + H(+). It catalyses the reaction N(6),N(6)-dimethyl-L-lysyl-[protein] + S-adenosyl-L-methionine = N(6),N(6),N(6)-trimethyl-L-lysyl-[protein] + S-adenosyl-L-homocysteine + H(+). Protein-lysine methyltransferase that efficiently catalyzes three successive methylations on 'Lys-36' in eukaryotic translation elongation factor 1 alpha (EEF1A1 or EEF1A2). The protein is EEF1A lysine methyltransferase 4 of Mus musculus (Mouse).